The primary structure comprises 37 residues: Large ribosomal subunit protein bL36 (37 aa).

The protein belongs to the bacterial ribosomal protein bL36 family.

This is Large ribosomal subunit protein bL36 from Leptospira interrogans serogroup Icterohaemorrhagiae serovar Lai (strain 56601).